Reading from the N-terminus, the 283-residue chain is Thymidylate synthase (283 aa).

Arg-33 contributes to the dUMP binding site. His-63 serves as a coordination point for (6R)-5,10-methylene-5,6,7,8-tetrahydrofolate. 138 to 139 lines the dUMP pocket; it reads RR. Cys-158 (nucleophile) is an active-site residue. DUMP is bound by residues 185–188, Asn-196, and 226–228; these read RSAD and HIY. Position 188 (Asp-188) interacts with (6R)-5,10-methylene-5,6,7,8-tetrahydrofolate. Ala-282 lines the (6R)-5,10-methylene-5,6,7,8-tetrahydrofolate pocket.

It belongs to the thymidylate synthase family. Bacterial-type ThyA subfamily. In terms of assembly, homodimer.

It localises to the cytoplasm. The enzyme catalyses dUMP + (6R)-5,10-methylene-5,6,7,8-tetrahydrofolate = 7,8-dihydrofolate + dTMP. Its pathway is pyrimidine metabolism; dTTP biosynthesis. In terms of biological role, catalyzes the reductive methylation of 2'-deoxyuridine-5'-monophosphate (dUMP) to 2'-deoxythymidine-5'-monophosphate (dTMP) while utilizing 5,10-methylenetetrahydrofolate (mTHF) as the methyl donor and reductant in the reaction, yielding dihydrofolate (DHF) as a by-product. This enzymatic reaction provides an intracellular de novo source of dTMP, an essential precursor for DNA biosynthesis. This is Thymidylate synthase from Methylibium petroleiphilum (strain ATCC BAA-1232 / LMG 22953 / PM1).